The primary structure comprises 31 residues: Photosystem II reaction center protein T (31 aa).

Residues 3 to 23 (ALVYTFLLIGTLGIIFFAIFF) form a helical membrane-spanning segment.

This sequence belongs to the PsbT family. As to quaternary structure, PSII is composed of 1 copy each of membrane proteins PsbA, PsbB, PsbC, PsbD, PsbE, PsbF, PsbH, PsbI, PsbJ, PsbK, PsbL, PsbM, PsbT, PsbY, PsbZ, Psb30/Ycf12, at least 3 peripheral proteins of the oxygen-evolving complex and a large number of cofactors. It forms dimeric complexes.

It localises to the plastid. The protein resides in the chloroplast thylakoid membrane. In terms of biological role, found at the monomer-monomer interface of the photosystem II (PS II) dimer, plays a role in assembly and dimerization of PSII. PSII is a light-driven water plastoquinone oxidoreductase, using light energy to abstract electrons from H(2)O, generating a proton gradient subsequently used for ATP formation. The protein is Photosystem II reaction center protein T of Stigeoclonium helveticum (Green alga).